The chain runs to 218 residues: Keratin-associated protein 10-8 (218 aa).

Positions 26–202 (CGNQVSSPSA…FCQPSCCHPA (177 aa)) are 16 X 5 AA repeats of C-C-X(3). Repeat copies occupy residues 50–54 (CCEPT), 55–59 (CCAPS), 60–64 (CCAPA), 86–90 (CSSSS), 96–100 (CCVPV), 101–105 (CCRPV), 111–115 (CCRPV), 121–125 (CCTPV), 131–135 (CCRPV), 136–140 (CCRPV), 141–145 (CCRPV), 151–155 (CCRPM), 161–167 (PCSAPSS), 168–172 (CCRPS), 187–191 (CCVPT), and 198–202 (CCHPA).

This sequence belongs to the KRTAP type 10 family. In terms of assembly, interacts with hair keratins.

Its function is as follows. In the hair cortex, hair keratin intermediate filaments are embedded in an interfilamentous matrix, consisting of hair keratin-associated proteins (KRTAP), which are essential for the formation of a rigid and resistant hair shaft through their extensive disulfide bond cross-linking with abundant cysteine residues of hair keratins. The matrix proteins include the high-sulfur and high-glycine-tyrosine keratins. This chain is Keratin-associated protein 10-8, found in Bos taurus (Bovine).